A 130-amino-acid polypeptide reads, in one-letter code: Glycine cleavage system H protein (130 aa).

In terms of domain architecture, Lipoyl-binding spans 24–106 (TVTIGITDHA…YDDGWFFKVK (83 aa)). The residue at position 65 (Lys-65) is an N6-lipoyllysine.

The protein belongs to the GcvH family. As to quaternary structure, the glycine cleavage system is composed of four proteins: P, T, L and H. It depends on (R)-lipoate as a cofactor.

In terms of biological role, the glycine cleavage system catalyzes the degradation of glycine. The H protein shuttles the methylamine group of glycine from the P protein to the T protein. In Saccharophagus degradans (strain 2-40 / ATCC 43961 / DSM 17024), this protein is Glycine cleavage system H protein.